The chain runs to 346 residues: Protein RecA (346 aa).

An ATP-binding site is contributed by 65-72 (GPESSGKT).

The protein belongs to the RecA family.

Its subcellular location is the cytoplasm. Can catalyze the hydrolysis of ATP in the presence of single-stranded DNA, the ATP-dependent uptake of single-stranded DNA by duplex DNA, and the ATP-dependent hybridization of homologous single-stranded DNAs. It interacts with LexA causing its activation and leading to its autocatalytic cleavage. In Pseudomonas aeruginosa (strain UCBPP-PA14), this protein is Protein RecA.